A 438-amino-acid chain; its full sequence is 3-phosphoshikimate 1-carboxyvinyltransferase (438 aa).

3-phosphoshikimate contacts are provided by Lys21, Ser22, and Arg26. Lys21 is a binding site for phosphoenolpyruvate. Phosphoenolpyruvate-binding residues include Gly95 and Arg123. Residues Ser167, Gln169, Asp315, and Lys342 each coordinate 3-phosphoshikimate. A phosphoenolpyruvate-binding site is contributed by Gln169. Asp315 acts as the Proton acceptor in catalysis. Phosphoenolpyruvate contacts are provided by Arg346 and Arg387.

This sequence belongs to the EPSP synthase family. In terms of assembly, monomer.

It localises to the cytoplasm. It carries out the reaction 3-phosphoshikimate + phosphoenolpyruvate = 5-O-(1-carboxyvinyl)-3-phosphoshikimate + phosphate. Its pathway is metabolic intermediate biosynthesis; chorismate biosynthesis; chorismate from D-erythrose 4-phosphate and phosphoenolpyruvate: step 6/7. Its function is as follows. Catalyzes the transfer of the enolpyruvyl moiety of phosphoenolpyruvate (PEP) to the 5-hydroxyl of shikimate-3-phosphate (S3P) to produce enolpyruvyl shikimate-3-phosphate and inorganic phosphate. The protein is 3-phosphoshikimate 1-carboxyvinyltransferase of Coxiella burnetii (strain CbuG_Q212) (Coxiella burnetii (strain Q212)).